Here is a 196-residue protein sequence, read N- to C-terminus: GTP cyclohydrolase-2 (196 aa).

49 to 53 (RVHSE) is a binding site for GTP. Zn(2+)-binding residues include Cys54, Cys65, and Cys67. GTP contacts are provided by residues Gln70, 92–94 (EGR), and Thr114. The active-site Proton acceptor is the Asp126. The active-site Nucleophile is the Arg128. Residues Thr149 and Lys154 each contribute to the GTP site.

Belongs to the GTP cyclohydrolase II family. As to quaternary structure, homodimer. The cofactor is Zn(2+).

The enzyme catalyses GTP + 4 H2O = 2,5-diamino-6-hydroxy-4-(5-phosphoribosylamino)-pyrimidine + formate + 2 phosphate + 3 H(+). It functions in the pathway cofactor biosynthesis; riboflavin biosynthesis; 5-amino-6-(D-ribitylamino)uracil from GTP: step 1/4. Its function is as follows. Catalyzes the conversion of GTP to 2,5-diamino-6-ribosylamino-4(3H)-pyrimidinone 5'-phosphate (DARP), formate and pyrophosphate. The polypeptide is GTP cyclohydrolase-2 (Shigella boydii serotype 18 (strain CDC 3083-94 / BS512)).